The primary structure comprises 475 residues: Aspartyl/glutamyl-tRNA(Asn/Gln) amidotransferase subunit B (475 aa).

This sequence belongs to the GatB/GatE family. GatB subfamily. In terms of assembly, heterotrimer of A, B and C subunits.

It carries out the reaction L-glutamyl-tRNA(Gln) + L-glutamine + ATP + H2O = L-glutaminyl-tRNA(Gln) + L-glutamate + ADP + phosphate + H(+). The enzyme catalyses L-aspartyl-tRNA(Asn) + L-glutamine + ATP + H2O = L-asparaginyl-tRNA(Asn) + L-glutamate + ADP + phosphate + 2 H(+). Functionally, allows the formation of correctly charged Asn-tRNA(Asn) or Gln-tRNA(Gln) through the transamidation of misacylated Asp-tRNA(Asn) or Glu-tRNA(Gln) in organisms which lack either or both of asparaginyl-tRNA or glutaminyl-tRNA synthetases. The reaction takes place in the presence of glutamine and ATP through an activated phospho-Asp-tRNA(Asn) or phospho-Glu-tRNA(Gln). This chain is Aspartyl/glutamyl-tRNA(Asn/Gln) amidotransferase subunit B, found in Staphylococcus aureus (strain COL).